The following is a 438-amino-acid chain: Exoglucanase 3 (438 aa).

The N-terminal stretch at 1–20 is a signal peptide; that stretch reads MFKFAALLALASLVPGFVQA. Residues 21-59 form the CBM1 domain; the sequence is QSPVWGQCGGNGWTGPTTCASGSTCVKQNDFYSQCLPNN. Intrachain disulfides connect Cys-28/Cys-45 and Cys-39/Cys-55. The segment at 57–90 is disordered; that stretch reads PNNQAPPSTTTQPGTTPPATTTSGGTGPTSGAGN. The interval 60–87 is linker; sequence QAPPSTTTQPGTTPPATTTSGGTGPTSG. A compositionally biased stretch (low complexity) spans 61–79; sequence APPSTTTQPGTTPPATTTS. A catalytic region spans residues 88–438; sequence AGNPYTGKTV…TLVANANPAL (351 aa). Disulfide bonds link Cys-170-Cys-229 and Cys-360-Cys-407. Asp-215 acts as the Proton donor in catalysis. Asp-393 (nucleophile) is an active-site residue.

It belongs to the glycosyl hydrolase 6 (cellulase B) family.

The enzyme catalyses Hydrolysis of (1-&gt;4)-beta-D-glucosidic linkages in cellulose and cellotetraose, releasing cellobiose from the non-reducing ends of the chains.. Shows enzymatic activity towards crystalline cellulose. At long reaction times. It is also able to degrade carboxymethyl cellulose and barley B-glucan. The protein is Exoglucanase 3 (cel3) of Agaricus bisporus (White button mushroom).